A 325-amino-acid chain; its full sequence is Adenine deaminase (325 aa).

His8, His10, and His186 together coordinate Zn(2+). Glu189 serves as the catalytic Proton donor. Residue Asp267 participates in Zn(2+) binding. Asp268 provides a ligand contact to substrate.

The protein belongs to the metallo-dependent hydrolases superfamily. Adenosine and AMP deaminases family. Adenine deaminase type 2 subfamily. Zn(2+) serves as cofactor.

It carries out the reaction adenine + H2O + H(+) = hypoxanthine + NH4(+). Its function is as follows. Catalyzes the hydrolytic deamination of adenine to hypoxanthine. Plays an important role in the purine salvage pathway and in nitrogen catabolism. The chain is Adenine deaminase from Chelativorans sp. (strain BNC1).